Here is a 2067-residue protein sequence, read N- to C-terminus: Lipoxygenase homology domain-containing protein 1 (2067 aa).

15 PLAT domains span residues 43 to 160, 172 to 287, 296 to 412, 425 to 540, 553 to 673, 684 to 803, 814 to 934, 969 to 1087, 1100 to 1225, 1254 to 1372, 1421 to 1539, 1552 to 1667, 1679 to 1797, 1810 to 1931, and 1948 to 2064; these read RVYE…RDLL, NKYE…RDIL, ITYI…RQLY, FPWS…REMT, ARYH…RELL, FRYH…VELY, VHYE…RELL, TTFS…RDLF, VPYE…RELV, VLYS…RLFY, IPYY…RVFD, VLYE…CEMC, TSYT…RDFA, TTYE…VFEV, and VKYE…RDLF.

The protein resides in the cell projection. It localises to the stereocilium. Functionally, involved in hearing. Required for normal function of hair cells in the inner ear. In Homo sapiens (Human), this protein is Lipoxygenase homology domain-containing protein 1 (LOXHD1).